A 72-amino-acid chain; its full sequence is Alpha-elapitoxin-Dpp2d (72 aa).

5 cysteine pairs are disulfide-bonded: C3–C21, C14–C42, C27–C31, C46–C57, and C58–C63. Residue R72 is modified to Arginine amide.

Belongs to the three-finger toxin family. Long-chain subfamily. Type II alpha-neurotoxin sub-subfamily. In terms of assembly, monomer (predominant). In terms of processing, amidation does not significantly affect toxin selectivity, since the activity profile and binding data are reminiscent of classical long-chain 3-finger toxins with a free carboxyl termini. Expressed by the venom gland.

Its subcellular location is the secreted. In terms of biological role, binds with high affinity to muscular (IC(50)=114 nM) and neuronal (alpha-7/CHRNA7) (IC(50)=58 nM) nicotinic acetylcholine receptor (nAChR) and inhibits acetylcholine from binding to the receptor, thereby impairing neuromuscular and neuronal transmission. Competitive radioligand binding assays also demonstrate that this toxin competes with epibatidine binding to the Lymnaea stagnalis acetylcholine-binding protein (Ls-AChBP) (IC(50)=4.9 nM). This is Alpha-elapitoxin-Dpp2d from Dendroaspis polylepis polylepis (Black mamba).